The chain runs to 148 residues: uncharacterized protein (148 aa).

Belongs to the serpin family. Poxviruses subfamily.

This is an uncharacterized protein from Fowlpox virus (strain NVSL) (FPV).